Here is a 270-residue protein sequence, read N- to C-terminus: Interleukin-1 alpha (270 aa).

Residues Met-1–Arg-114 constitute a propeptide that is removed on maturation. The N-linked (GlcNAc...) asparagine glycan is linked to Asn-64. Position 85 is an N6-acetyllysine (Lys-85). A nuclear localization signal (NLS) region spans residues Lys-85–Leu-89. The residue at position 90 (Ser-90) is a Phosphoserine. Asn-139 and Asn-143 each carry an N-linked (GlcNAc...) asparagine glycan.

This sequence belongs to the IL-1 family. In terms of assembly, monomer. Interacts with TMED10; the interaction mediates the translocation from the cytoplasm into the ERGIC (endoplasmic reticulum-Golgi intermediate compartment) and thereby secretion. Interacts with IL1R1. Interacts with S100A13; this interaction is the first step in the export of IL1A, followed by direct translocation of this complex across the plasma membrane. In terms of processing, acetylated within its nuclear localization sequence, which impacts subcellular localization. Post-translationally, proteolytic processed by CAPN1 in a calcium-dependent manner. Cleavage from 31 kDa precursor to 18 kDa biologically active molecules. Phosphorylated. Phosphorylation greatly enhances susceptibility to digestion and promotes the conversion of pre-IL1A alpha to the biologically active IL1A.

The protein resides in the nucleus. The protein localises to the cytoplasm. It is found in the secreted. In terms of biological role, cytokine constitutively present intracellularly in nearly all resting non-hematopoietic cells that plays an important role in inflammation and bridges the innate and adaptive immune systems. After binding to its receptor IL1R1 together with its accessory protein IL1RAP, forms the high affinity interleukin-1 receptor complex. Signaling involves the recruitment of adapter molecules such as MYD88, IRAK1 or IRAK4. In turn, mediates the activation of NF-kappa-B and the three MAPK pathways p38, p42/p44 and JNK pathways. Within the cell, acts as an alarmin and cell death results in its liberation in the extracellular space after disruption of the cell membrane to induce inflammation and alert the host to injury or damage. In addition to its role as a danger signal, which occurs when the cytokine is passively released by cell necrosis, directly senses DNA damage and acts as a signal for genotoxic stress without loss of cell integrity. In Mus musculus (Mouse), this protein is Interleukin-1 alpha.